The sequence spans 82 residues: RNA-binding protein Hfq (82 aa).

The Sm domain occupies 10–69; sequence DPFLNALRREHVPVSIYLVNGIKLQGQIESFDQYVVLLRNTVTQMVYKHAISTIVPGRAV.

Belongs to the Hfq family. Homohexamer.

In terms of biological role, RNA chaperone that binds small regulatory RNA (sRNAs) and mRNAs to facilitate mRNA translational regulation in response to envelope stress, environmental stress and changes in metabolite concentrations. Also binds with high specificity to tRNAs. The sequence is that of RNA-binding protein Hfq from Albidiferax ferrireducens (strain ATCC BAA-621 / DSM 15236 / T118) (Rhodoferax ferrireducens).